Here is a 152-residue protein sequence, read N- to C-terminus: Deoxyuridine 5'-triphosphate nucleotidohydrolase (152 aa).

Substrate contacts are provided by residues Arg72–Gly74, Asn85, and Thr89–Asp91.

It belongs to the dUTPase family. Requires Mg(2+) as cofactor.

It carries out the reaction dUTP + H2O = dUMP + diphosphate + H(+). It functions in the pathway pyrimidine metabolism; dUMP biosynthesis; dUMP from dCTP (dUTP route): step 2/2. Functionally, this enzyme is involved in nucleotide metabolism: it produces dUMP, the immediate precursor of thymidine nucleotides and it decreases the intracellular concentration of dUTP so that uracil cannot be incorporated into DNA. This Nitrobacter winogradskyi (strain ATCC 25391 / DSM 10237 / CIP 104748 / NCIMB 11846 / Nb-255) protein is Deoxyuridine 5'-triphosphate nucleotidohydrolase.